A 271-amino-acid polypeptide reads, in one-letter code: Putative phosphoenolpyruvate synthase regulatory protein (271 aa).

Residue Gly151–Thr158 coordinates ADP.

The protein belongs to the pyruvate, phosphate/water dikinase regulatory protein family. PSRP subfamily.

It catalyses the reaction [pyruvate, water dikinase] + ADP = [pyruvate, water dikinase]-phosphate + AMP + H(+). The catalysed reaction is [pyruvate, water dikinase]-phosphate + phosphate + H(+) = [pyruvate, water dikinase] + diphosphate. Functionally, bifunctional serine/threonine kinase and phosphorylase involved in the regulation of the phosphoenolpyruvate synthase (PEPS) by catalyzing its phosphorylation/dephosphorylation. This Burkholderia orbicola (strain MC0-3) protein is Putative phosphoenolpyruvate synthase regulatory protein.